Consider the following 554-residue polypeptide: Protein NODULATION SIGNALING PATHWAY 1 (554 aa).

The tract at residues 76 to 165 (TTSTTSLEPN…NSNNGNNKDG (90 aa)) is disordered. Over residues 82–91 (LEPNSFNNIP) the composition is skewed to polar residues. Residues 95–107 (LPKKRNAEDELSL) are compositionally biased toward basic and acidic residues. Residues 150–162 (AKANGSNSNNGNN) are compositionally biased toward low complexity. Residues 159–548 (NGNNKDGRWA…QPVSFCSLWK (390 aa)) enclose the GRAS domain. Positions 166–227 (RWAEQLLNPC…HHLSSSSSST (62 aa)) are leucine repeat I (LRI). The VHIID stretch occupies residues 246 to 315 (LLKFYEFSPW…GGPPPLVRLT (70 aa)). A VHIID motif is present at residues 281–285 (LHILD). The interval 331–373 (TPFSIGPCGDTFSSGLLGYAQSLNVNLQIKKLDNHPLQTLNAK) is leucine repeat II (LRII). The segment at 383 to 468 (LIVCAQFRLH…RDSDERKMME (86 aa)) is PFYRE. Positions 471–548 (AAKALTNQRE…QPVSFCSLWK (78 aa)) are SAW.

This sequence belongs to the GRAS family. As to expression, expressed in epidermal and cortical root cells.

Its subcellular location is the nucleus. Its function is as follows. Transcriptional regulator essential for Nod-factor-induced gene expression. Acts downstream of calcium spiking. May be a target of DMI3, a calcium/calmodulin-dependent protein kinase (CCaMK). Is essential for Nod factor-elicited expression of ERN1. Transcription factor involved in the control of strigolactone biosynthesis in roots through the activation of the beta-carotene isomerase D27, which participates in a pathway leading to biosynthesis of strigolactones. The polypeptide is Protein NODULATION SIGNALING PATHWAY 1 (Medicago truncatula (Barrel medic)).